The sequence spans 239 residues: Uridylate kinase (239 aa).

An ATP-binding site is contributed by 13–16 (KLSG). G55 contacts UMP. Residues G56 and R60 each coordinate ATP. Residues D75 and 136 to 143 (TGNPFFTT) contribute to the UMP site. Positions 163, 164, 169, and 172 each coordinate ATP.

This sequence belongs to the UMP kinase family. Homohexamer.

The protein localises to the cytoplasm. It catalyses the reaction UMP + ATP = UDP + ADP. It participates in pyrimidine metabolism; CTP biosynthesis via de novo pathway; UDP from UMP (UMPK route): step 1/1. With respect to regulation, inhibited by UTP. Catalyzes the reversible phosphorylation of UMP to UDP. This chain is Uridylate kinase, found in Neisseria meningitidis serogroup C / serotype 2a (strain ATCC 700532 / DSM 15464 / FAM18).